Here is a 918-residue protein sequence, read N- to C-terminus: Whirlin (918 aa).

Positions 141–224 constitute a PDZ 1 domain; it reads LVSLRRAKAH…LVLSVYSAGR (84 aa). The interval 240–266 is disordered; that stretch reads PQGRSTSPPSSLPQPHGSTLRQREDDR. The 83-residue stretch at 280-362 folds into the PDZ 2 domain; that stretch reads KVNLVLGDGR…LILTVKDVGR (83 aa). Disordered regions lie at residues 387–407, 503–538, and 560–824; these read NSAG…GFYK, SMKA…TSTT, and EGTG…LEPT. Residues 522–538 show a composition bias toward low complexity; sequence SYSDTGSSTGSHGTSTT. A compositionally biased stretch (polar residues) spans 563–572; it reads GETTQGSTNA. Pro residues-rich tracts occupy residues 591–600 and 638–649; these read IKPPPPPPPL and RSPPPGTAPTPG. The segment covering 654 to 672 has biased composition (polar residues); sequence QDSPSSPIYASISHANPSS. Serine 696 carries the post-translational modification Phosphoserine. Polar residues-rich tracts occupy residues 754–773 and 783–798; these read QTRT…TLSE and EAST…SAKN. Residues 800–811 show a composition bias toward basic and acidic residues; that stretch reads NGKEQPRTERTA. The PDZ 3 domain occupies 827-910; that stretch reads LVRVRKSAAT…TKERDYIDFL (84 aa).

In terms of assembly, forms homooligomers. Interacts (via C-terminal PDZ domain) with MYO15A; this interaction is necessary for localization of WHRN to stereocilia tips. Interacts (via C-terminal PDZ domain) with MPP1/p55. Interacts with LRRC4C/NGL1. Interacts with MYO7A. Interacts with RPGR. Interacts with EPS8. Interacts with CASK. Interacts with CIB2. Component of USH2 complex, composed of ADGRV1, PDZD7, USH2A and WHRN. Interacts (via PDZ domains) with PDZD7; the interaction is direct. Interacts (via N-terminal PDZ domain) with USH2A (via cytoplasmic region). Interacts with ADGRV1/MASS1 (via cytoplasmic region). As to expression, expressed in the retina. Colocalizes with RPGR in the photoreceptor connecting cilium, a thin bridge linking the cell body and the light-sensing outer segment (at protein level). Detected in the inner ear throughout development from embryonic day 12 to 20 days after birth. Displays a dynamic pattern of expression after birth, demonstrating an ordered appearance and fade-out across stereocilia rows. Isoforms 5, 6, 7 and 8 are not detected in the retina.

It localises to the cytoplasm. It is found in the cell projection. Its subcellular location is the stereocilium. The protein resides in the growth cone. The protein localises to the photoreceptor inner segment. It localises to the synapse. Functionally, involved in hearing and vision as member of the USH2 complex. Necessary for elongation and maintenance of inner and outer hair cell stereocilia in the organ of Corti in the inner ear. Involved in the maintenance of the hair bundle ankle region, which connects stereocilia in cochlear hair cells of the inner ear. In retina photoreceptors, required for the maintenance of periciliary membrane complex that seems to play a role in regulating intracellular protein transport. The sequence is that of Whirlin from Mus musculus (Mouse).